The chain runs to 87 residues: Small ribosomal subunit protein uS15 (87 aa).

The protein belongs to the universal ribosomal protein uS15 family. Part of the 30S ribosomal subunit. Forms a bridge to the 50S subunit in the 70S ribosome, contacting the 23S rRNA.

One of the primary rRNA binding proteins, it binds directly to 16S rRNA where it helps nucleate assembly of the platform of the 30S subunit by binding and bridging several RNA helices of the 16S rRNA. Its function is as follows. Forms an intersubunit bridge (bridge B4) with the 23S rRNA of the 50S subunit in the ribosome. The chain is Small ribosomal subunit protein uS15 from Dehalococcoides mccartyi (strain ATCC BAA-2100 / JCM 16839 / KCTC 5957 / BAV1).